The following is a 111-amino-acid chain: Large ribosomal subunit protein uL23 (111 aa).

It belongs to the universal ribosomal protein uL23 family. As to quaternary structure, part of the 50S ribosomal subunit. Contacts protein L29, and trigger factor when it is bound to the ribosome.

One of the early assembly proteins it binds 23S rRNA. One of the proteins that surrounds the polypeptide exit tunnel on the outside of the ribosome. Forms the main docking site for trigger factor binding to the ribosome. In Nitrosomonas europaea (strain ATCC 19718 / CIP 103999 / KCTC 2705 / NBRC 14298), this protein is Large ribosomal subunit protein uL23.